The primary structure comprises 274 residues: Protein-export membrane protein SecF (274 aa).

The next 6 membrane-spanning stretches (helical) occupy residues 14–34 (LLIL…ALGV), 121–141 (SVKV…FAIF), 143–163 (KPLL…DALG), 175–197 (ASFA…LSMY), 217–237 (TGIT…LLSM), and 247–267 (VVIF…AWVI).

This sequence belongs to the SecD/SecF family. SecF subfamily. As to quaternary structure, part of the protein translocation apparatus. Forms a complex with SecD.

It localises to the cell membrane. In terms of biological role, involved in protein export. The sequence is that of Protein-export membrane protein SecF from Methanopyrus kandleri (strain AV19 / DSM 6324 / JCM 9639 / NBRC 100938).